Reading from the N-terminus, the 237-residue chain is Probable transcriptional regulatory protein WS1016 (237 aa).

The protein belongs to the TACO1 family.

It localises to the cytoplasm. The polypeptide is Probable transcriptional regulatory protein WS1016 (Wolinella succinogenes (strain ATCC 29543 / DSM 1740 / CCUG 13145 / JCM 31913 / LMG 7466 / NCTC 11488 / FDC 602W) (Vibrio succinogenes)).